The following is a 487-amino-acid chain: E3 ubiquitin-protein ligase RNF8 (487 aa).

Positions 38 to 92 (VTIGRGFSVTYQLISKVCPLMISRNHCVLKQNPEGQWTIMDNKSLNGVWLNRERL) constitute an FHA domain. The interval 68 to 72 (QNPEG) is required for interaction with PIWIL1. The segment at 135–195 (CLAPKNDHTT…PEKLHGKGEA (61 aa)) is disordered. Ser157 carries the phosphoserine modification. The segment covering 184–193 (AEPEKLHGKG) has biased composition (basic and acidic residues). An RING-type zinc finger spans residues 405–443 (CIICSEYFIEAVTLNCAHSFCSFCISEWMKRKVECPICR).

This sequence belongs to the RNF8 family. Homodimer. Forms a E2-E3 ubiquitin ligase complex composed of the RNF8 homodimer and a E2 heterodimer of UBE2N and UBE2V2. Interacts with class III E2s, including UBE2E1, UBE2E2, and UBE2E3 and with UBE2N. Interacts with RXRA. Interacts (via FHA domain) with phosphorylated HERC2 (via C-terminus). Interacts with PIWIL1; leading to sequester RNF8 in the cytoplasm. Interacts with WRAP53/TCAB1. Post-translationally, autoubiquitinated through 'Lys-48' and 'Lys-63' of ubiquitin. 'Lys-63' polyubiquitination is mediated by UBE2N. 'Lys-29'-type polyubiquitination is also observed, but it doesn't require its own functional RING-type zinc finger.

It localises to the nucleus. The protein localises to the cytoplasm. It is found in the midbody. The protein resides in the chromosome. Its subcellular location is the telomere. It carries out the reaction S-ubiquitinyl-[E2 ubiquitin-conjugating enzyme]-L-cysteine + [acceptor protein]-L-lysine = [E2 ubiquitin-conjugating enzyme]-L-cysteine + N(6)-ubiquitinyl-[acceptor protein]-L-lysine.. The protein operates within protein modification; protein ubiquitination. E3 ubiquitin-protein ligase that plays a key role in DNA damage signaling via 2 distinct roles: by mediating the 'Lys-63'-linked ubiquitination of histones H2A and H2AX and promoting the recruitment of DNA repair proteins at double-strand breaks (DSBs) sites, and by catalyzing 'Lys-48'-linked ubiquitination to remove target proteins from DNA damage sites. Following DNA DSBs, it is recruited to the sites of damage by ATM-phosphorylated MDC1 and catalyzes the 'Lys-63'-linked ubiquitination of histones H2A and H2AX, thereby promoting the formation of TP53BP1 and BRCA1 ionizing radiation-induced foci (IRIF). Also controls the recruitment of UIMC1-BRCC3 (RAP80-BRCC36) and PAXIP1/PTIP to DNA damage sites. Promotes the recruitment of NBN to DNA damage sites by catalyzing 'Lys-6'-linked ubiquitination of NBN. Also recruited at DNA interstrand cross-links (ICLs) sites and catalyzes 'Lys-63'-linked ubiquitination of histones H2A and H2AX, leading to recruitment of FAAP20 and Fanconi anemia (FA) complex, followed by interstrand cross-link repair. H2A ubiquitination also mediates the ATM-dependent transcriptional silencing at regions flanking DSBs in cis, a mechanism to avoid collision between transcription and repair intermediates. Promotes the formation of 'Lys-63'-linked polyubiquitin chains via interactions with the specific ubiquitin-conjugating UBE2N/UBC13 and ubiquitinates non-histone substrates such as PCNA. Substrates that are polyubiquitinated at 'Lys-63' are usually not targeted for degradation. Also catalyzes the formation of 'Lys-48'-linked polyubiquitin chains via interaction with the ubiquitin-conjugating UBE2L6/UBCH8, leading to degradation of substrate proteins such as CHEK2, JMJD2A/KDM4A and KU80/XRCC5: it is still unclear how the preference toward 'Lys-48'- versus 'Lys-63'-linked ubiquitination is regulated but it could be due to RNF8 ability to interact with specific E2 specific ligases. For instance, interaction with phosphorylated HERC2 promotes the association between RNF8 and UBE2N/UBC13 and favors the specific formation of 'Lys-63'-linked ubiquitin chains. Promotes non-homologous end joining (NHEJ) by promoting the 'Lys-48'-linked ubiquitination and degradation the of KU80/XRCC5. Following DNA damage, mediates the ubiquitination and degradation of JMJD2A/KDM4A in collaboration with RNF168, leading to unmask H4K20me2 mark and promote the recruitment of TP53BP1 at DNA damage sites. Following DNA damage, mediates the ubiquitination and degradation of POLD4/p12, a subunit of DNA polymerase delta. In the absence of POLD4, DNA polymerase delta complex exhibits higher proofreading activity. In addition to its function in damage signaling, also plays a role in higher-order chromatin structure by mediating extensive chromatin decondensation. Involved in the activation of ATM by promoting histone H2B ubiquitination, which indirectly triggers histone H4 'Lys-16' acetylation (H4K16ac), establishing a chromatin environment that promotes efficient activation of ATM kinase. Required in the testis, where it plays a role in the replacement of histones during spermatogenesis. At uncapped telomeres, promotes the joining of deprotected chromosome ends by inducing H2A ubiquitination and TP53BP1 recruitment, suggesting that it may enhance cancer development by aggravating telomere-induced genome instability in case of telomeric crisis. Promotes the assembly of RAD51 at DNA DSBs in the absence of BRCA1 and TP53BP1 Also involved in class switch recombination in immune system, via its role in regulation of DSBs repair. May be required for proper exit from mitosis after spindle checkpoint activation and may regulate cytokinesis. May play a role in the regulation of RXRA-mediated transcriptional activity. Not involved in RXRA ubiquitination by UBE2E2. The chain is E3 ubiquitin-protein ligase RNF8 from Rattus norvegicus (Rat).